A 967-amino-acid polypeptide reads, in one-letter code: MDVASECNIKVICRVRPLNEAEERAGSKFILKFPTDDSISIAGKVFVFDKVLKPNVSQEYVYNVGAKPIVADVLSGCNGTIFAYGQTSSGKTHTMEGVLDKPSMHGIIPRIVQDIFNYIYGMDENLEFHIKISYYEIYLDKIRDLLDVTKTNLAVHEDKNRVPFVKGATERFVSSPEEVMEVIDEGKNNRHVAVTNMNEHSSRSHSVFLINVKQENVETQKKLSGKLYLVDLAGSEKVSKTGAEGAVLDEAKNINKSLSALGNVISALADGNKSHVPYRDSKLTRILQESLGGNARTTMVICCSPASYNESETKSTLLFGQRAKTIKNVVSVNEELTADEWKRRYEKEKERVTKLKATMAKLEAELQRWRTGQAVSVEEQVDLKEDVPAESPATSTTSLAGGLIASMNEGDRTQLEEERLKLYQQLDDKDDEINNQSQLIEKLKEQMMEQEDLIAQSRRDYENLQQDMSRIQADNESAKDEVKEVLQALEELAMNYDQKSQEVEDKNKENENLSEELNQKLSTLNSLQNELDQLKDSSMHHRKRVTDMMINLLKDLGDIGTIVGGNAAETKPTAGSGEKIEEEFTVARLYISKMKSEVKTLVSRNNQLENTQQDNFKKIETHEKDLSNCKLLIQQHEAKMASLQEAIKDSENKKRMLEDNVDSLNEEYAKLKAQEQMHLAALSEREKETSQASETREVLEKQMEMHREQHQKQLQSLRDEISEKQATVDNLKDDNQRLSLALEKLQADYDKLKQEEVEKAAKLADLSLQIDRREQAKQDLKGLEETVAKELQTLHNLRKLFVQDLQNKVKKSCSKTEEEDEDTGGNAAQKQKISFLENNLEQLTKVHKQLVRDNADLRCELPKLEKRLRATMERVKSLESALKDAKEGAMRDRKRYQHEVDRIKEAVRQKNLARRGHAAQIAKPIRPGQHQSVSPAQAAAIRGGGGLSQNGPMITSTPIRMAPESKA.

Residues 8–326 (NIKVICRVRP…LLFGQRAKTI (319 aa)) form the Kinesin motor domain. 85 to 92 (GQTSSGKT) serves as a coordination point for ATP. Positions 173–314 (VSSPEEVMEV…PASYNESETK (142 aa)) are microtubule-binding. Disordered stretches follow at residues 387–411 (VPAESPATSTTSLAGGLIASMNEGD) and 923–967 (KPIR…ESKA). The stretch at 392 to 861 (PATSTTSLAG…RDNADLRCEL (470 aa)) forms a coiled coil. Residues 862 to 967 (PKLEKRLRAT…PIRMAPESKA (106 aa)) are globular. Polar residues predominate over residues 949-958 (QNGPMITSTP).

It belongs to the TRAFAC class myosin-kinesin ATPase superfamily. Kinesin family. Kinesin subfamily. In terms of assembly, oligomer composed of two heavy chains and two light chains. Interacts with amyloid-beta precursor-like protein (via cytoplasmic domain).

Its subcellular location is the cytoplasm. It localises to the cytoskeleton. The protein resides in the cell projection. It is found in the axon. Functionally, kinesin is a microtubule-associated force-producing protein that may play a role in organelle transport. This Doryteuthis pealeii (Longfin inshore squid) protein is Kinesin heavy chain.